Here is a 294-residue protein sequence, read N- to C-terminus: Lipoprotein NlpI (294 aa).

Residues 1–18 (MKPFLRWCFVATALTLAG) form the signal peptide. A lipid anchor (N-palmitoyl cysteine) is attached at Cys-19. Cys-19 is lipidated: S-diacylglycerol cysteine. TPR repeat units lie at residues 62-95 (AQLL…RPDM), 96-129 (PEVF…DPTY), and 234-267 (SETN…NVHN).

Homodimer.

It localises to the cell membrane. May be involved in cell division. May play a role in bacterial septation or regulation of cell wall degradation during cell division. The polypeptide is Lipoprotein NlpI (nlpI) (Escherichia coli O17:K52:H18 (strain UMN026 / ExPEC)).